Reading from the N-terminus, the 399-residue chain is P2X purinoceptor 1 (399 aa).

Topologically, residues 1-28 (MARRLQDELSAFFFEYDTPRMVLVRNKK) are cytoplasmic. A helical transmembrane segment spans residues 29-50 (VGVIFRLIQLVVLVYVIGWVFV). At 51–338 (YEKGYQTSSG…IPTMTTIGSG (288 aa)) the chain is on the extracellular side. Positions 68, 70, and 140 each coordinate CTP. Lys70 contacts ATP. Intrachain disulfides connect Cys117/Cys165, Cys126/Cys149, and Cys132/Cys159. N-linked (GlcNAc...) asparagine glycans are attached at residues Asn153 and Asn184. Residue Thr186 coordinates CTP. ATP is bound at residue Thr186. Residue Asn210 is glycosylated (N-linked (GlcNAc...) asparagine). 2 cysteine pairs are disulfide-bonded: Cys217–Cys227 and Cys261–Cys270. ATP-binding residues include Ser286, Asn290, and Arg292. Residues Asn290 and Arg292 each contribute to the CTP site. N-linked (GlcNAc...) asparagine glycosylation is present at Asn300. Lys309 lines the CTP pocket. Lys309 is an ATP binding site. Residues 331 to 338 (TMTTIGSG) are pore-forming motif. The chain crosses the membrane as a helical span at residues 339–358 (IGIFGVATVLCDLLLLHILP). The Cytoplasmic segment spans residues 359 to 399 (KRHYYKQKKFKYAEDMGPGEGERDPAATSSTLGLQENMRTS). Residues 374 to 399 (MGPGEGERDPAATSSTLGLQENMRTS) are disordered. Polar residues predominate over residues 385–399 (ATSSTLGLQENMRTS). Phosphoserine occurs at positions 387 and 388. Thr389 carries the post-translational modification Phosphothreonine.

This sequence belongs to the P2X receptor family. As to quaternary structure, functional P2XRs are organized as homomeric and heteromeric trimers. Forms heterodimer with P2RX2. Forms heterodimer with P2RX4. Forms heterodimer with P2RX5. As to expression, expressed in smooth muscle of the bladder and arteries.

It localises to the cell membrane. The catalysed reaction is Ca(2+)(in) = Ca(2+)(out). It carries out the reaction K(+)(in) = K(+)(out). It catalyses the reaction Na(+)(in) = Na(+)(out). Its activity is regulated as follows. Activated by low concentrations of ATP (&lt;1 uM). Undergoes rapid desensitisation. Sensitives to the ATP agonist:alpha/beta-methylene-ATP. Modulated by cholesterol. ATP-gated nonselective transmembrane cation channel permeable to potassium, sodium and with relatively high calcium permeability. Furthermore, CTP functions as a weak affinity agonist for P2RX1. Plays a role in male fertility, bladder contraction and platelet aggregation. Specifically, plays an important role in neurogenic contraction of smooth muscle of the vas deferens, and therefore is essential for normal male reproductive function. In addition, contributes to smooth muscle contractions of the urinary bladder. On platelets, contributes to platelet activation and aggregation and thereby, also to thrombosis. On neutrophils, it is involved in chemotaxis and in mitigating the activation of circulating cells. In Mus musculus (Mouse), this protein is P2X purinoceptor 1 (P2rx1).